The following is a 515-amino-acid chain: Envelope glycoprotein (515 aa).

The N-terminal stretch at 1–33 is a signal peptide; that stretch reads MPKERRSRRRPQPIIRWVSLTLTLLSLCQPIQT. At 34 to 435 the chain is on the extracellular side; that stretch reads WRCSLSLGNQ…LGLTAWVRET (402 aa). N-linked (GlcNAc...) asparagine; by host glycosylation is found at N129 and N203. Positions 212-215 match the CXXC motif; that stretch reads CAIC. 3 cysteine pairs are disulfide-bonded: C212-C215, C212-C392, and C384-C391. 5 N-linked (GlcNAc...) asparagine; by host glycosylation sites follow: N230, N251, N256, N271, and N287. The tract at residues 304-324 is fusion peptide; that stretch reads AAALTLGLALSVGLTGINVAV. Coiled coils occupy residues 330–376 and 388–420; these read QRLT…WLYI and NEPC…DWQW. N351 is a glycosylation site (N-linked (GlcNAc...) asparagine; by host). The tract at residues 365-381 is immunosuppression; the sequence is AQNRRGLDWLYIRLGFQ. The CX6CC motif lies at 384 to 392; the sequence is CPTINEPCC. The N-linked (GlcNAc...) asparagine; by host glycan is linked to N398. The helical transmembrane segment at 436-456 threads the bilayer; the sequence is IHSVLSLFLLALFLLFLAPCL. Residue C455 is the site of S-palmitoyl cysteine; by host attachment. The Cytoplasmic portion of the chain corresponds to 457–515; it reads IKCLTSRLLKLLRQAPHFPEISLAPKPDSDYQALLPSAPEIYSHLSPTKPDYINLRPCP.

In terms of assembly, the mature envelope protein (Env) consists of a trimer of SU-TM heterodimers attached by a labile interchain disulfide bond. Post-translationally, specific enzymatic cleavages in vivo yield mature proteins. Envelope glycoproteins are synthesized as an inactive precursor that is N-glycosylated and processed likely by host cell furin or by a furin-like protease in the Golgi to yield the mature SU and TM proteins. The cleavage site between SU and TM requires the minimal sequence [KR]-X-[KR]-R. In terms of processing, the CXXC motif is highly conserved across a broad range of retroviral envelope proteins. It is thought to participate in the formation of a labile disulfide bond possibly with the CX6CC motif present in the transmembrane protein. Isomerization of the intersubunit disulfide bond to an SU intrachain disulfide bond is thought to occur upon receptor recognition in order to allow membrane fusion. The transmembrane protein is palmitoylated.

It is found in the virion membrane. The protein resides in the host cell membrane. In terms of biological role, the surface protein (SU) attaches the virus to the host cell by binding to its receptor. This interaction triggers the refolding of the transmembrane protein (TM) and is thought to activate its fusogenic potential by unmasking its fusion peptide. Fusion occurs at the host cell plasma membrane. Functionally, the transmembrane protein (TM) acts as a class I viral fusion protein. Under the current model, the protein has at least 3 conformational states: pre-fusion native state, pre-hairpin intermediate state, and post-fusion hairpin state. During viral and target cell membrane fusion, the coiled coil regions (heptad repeats) assume a trimer-of-hairpins structure, positioning the fusion peptide in close proximity to the C-terminal region of the ectodomain. The formation of this structure appears to drive apposition and subsequent fusion of viral and target cell membranes. Membranes fusion leads to delivery of the nucleocapsid into the cytoplasm. This chain is Envelope glycoprotein (env), found in Bovine leukemia virus (isolate Belgium LB285) (BLV).